The primary structure comprises 376 residues: Putative phosphoserine aminotransferase (376 aa).

Arginine 50 lines the L-glutamate pocket. Pyridoxal 5'-phosphate-binding positions include 84–85 (AT), phenylalanine 108, threonine 154, aspartate 176, and glutamine 199. At lysine 200 the chain carries N6-(pyridoxal phosphate)lysine. 251–252 (NT) contributes to the pyridoxal 5'-phosphate binding site.

This sequence belongs to the class-V pyridoxal-phosphate-dependent aminotransferase family. SerC subfamily. Homodimer. The cofactor is pyridoxal 5'-phosphate.

Its subcellular location is the cytoplasm. It catalyses the reaction O-phospho-L-serine + 2-oxoglutarate = 3-phosphooxypyruvate + L-glutamate. The enzyme catalyses 4-(phosphooxy)-L-threonine + 2-oxoglutarate = (R)-3-hydroxy-2-oxo-4-phosphooxybutanoate + L-glutamate. Its pathway is amino-acid biosynthesis; L-serine biosynthesis; L-serine from 3-phospho-D-glycerate: step 2/3. The protein operates within cofactor biosynthesis; pyridoxine 5'-phosphate biosynthesis; pyridoxine 5'-phosphate from D-erythrose 4-phosphate: step 3/5. Catalyzes the reversible conversion of 3-phosphohydroxypyruvate to phosphoserine and of 3-hydroxy-2-oxo-4-phosphonooxybutanoate to phosphohydroxythreonine. The protein is Putative phosphoserine aminotransferase of Mycobacterium bovis (strain ATCC BAA-935 / AF2122/97).